The chain runs to 214 residues: Orotate phosphoribosyltransferase (214 aa).

Residues Arg125, Lys126, Lys129, His131, and 151–159 (EDTSTTGNS) each bind 5-phospho-alpha-D-ribose 1-diphosphate. Orotate-binding residues include Thr155 and Arg183.

Belongs to the purine/pyrimidine phosphoribosyltransferase family. PyrE subfamily. Homodimer. The cofactor is Mg(2+).

It carries out the reaction orotidine 5'-phosphate + diphosphate = orotate + 5-phospho-alpha-D-ribose 1-diphosphate. It participates in pyrimidine metabolism; UMP biosynthesis via de novo pathway; UMP from orotate: step 1/2. Functionally, catalyzes the transfer of a ribosyl phosphate group from 5-phosphoribose 1-diphosphate to orotate, leading to the formation of orotidine monophosphate (OMP). The sequence is that of Orotate phosphoribosyltransferase from Tropheryma whipplei (strain Twist) (Whipple's bacillus).